The primary structure comprises 672 residues: Spermatid perinuclear RNA-binding protein (672 aa).

The DZF domain occupies 5–363 (RSFANDDRHV…ALKRPFEDGL (359 aa)). 2 disordered regions span residues 52-73 (TNKG…GENY) and 349-371 (GAGS…DPNK). Residues 357-371 (RPFEDGLGDDKDPNK) are compositionally biased toward basic and acidic residues. One can recognise a DRBM 1 domain in the interval 387–453 (DLMNALMRLN…AVKVLQAMGY (67 aa)). Basic and acidic residues predominate over residues 466–476 (SDEKSDNESKN). The tract at residues 466–499 (SDEKSDNESKNETVSSNSSNNTGNSTTETSSTLE) is disordered. Low complexity predominate over residues 477–497 (ETVSSNSSNNTGNSTTETSST). The DRBM 2 domain maps to 510-576 (SGKNPVMELN…ALAALEKLFS (67 aa)). Arg-612 and Arg-617 each carry asymmetric dimethylarginine.

In terms of assembly, interacts with EIF2AK2. Associates with microtubules; it is unsure whether such interaction is direct or indirect.

It localises to the cytoplasm. In terms of biological role, involved in spermatogenesis and sperm function. Plays a role in regulation of cell growth. Binds to double-stranded DNA and RNA. Binds most efficiently to poly(I:C) RNA than to poly(dI:dC) DNA. Binds also to single-stranded poly(G) RNA. Binds non-specifically to the mRNA PRM1 3'-UTR and adenovirus VA RNA. In Homo sapiens (Human), this protein is Spermatid perinuclear RNA-binding protein (STRBP).